Here is a 679-residue protein sequence, read N- to C-terminus: Methionine--tRNA ligase (679 aa).

Residues 12–22 (PYANGAIHLGH) carry the 'HIGH' region motif. Residues C143, C146, C156, and C159 each contribute to the Zn(2+) site. The short motif at 328–332 (KMSKS) is the 'KMSKS' region element. Residue K331 coordinates ATP. The tRNA-binding domain occupies 577–679 (DFAKLDLRVA…EGIRPGMQVK (103 aa)).

Belongs to the class-I aminoacyl-tRNA synthetase family. MetG type 1 subfamily. In terms of assembly, homodimer. Zn(2+) serves as cofactor.

The protein localises to the cytoplasm. The enzyme catalyses tRNA(Met) + L-methionine + ATP = L-methionyl-tRNA(Met) + AMP + diphosphate. Functionally, is required not only for elongation of protein synthesis but also for the initiation of all mRNA translation through initiator tRNA(fMet) aminoacylation. This Actinobacillus pleuropneumoniae serotype 5b (strain L20) protein is Methionine--tRNA ligase.